We begin with the raw amino-acid sequence, 288 residues long: Energy-coupling factor transporter ATP-binding protein EcfA2 (288 aa).

In terms of domain architecture, ABC transporter spans 3–245; sequence IKIENLTHVY…VDTLESVGLA (243 aa). Position 40–47 (40–47) interacts with ATP; the sequence is GHTGSGKS.

It belongs to the ABC transporter superfamily. Energy-coupling factor EcfA family. In terms of assembly, forms a stable energy-coupling factor (ECF) transporter complex composed of 2 membrane-embedded substrate-binding proteins (S component), 2 ATP-binding proteins (A component) and 2 transmembrane proteins (T component).

The protein resides in the cell membrane. In terms of biological role, ATP-binding (A) component of a common energy-coupling factor (ECF) ABC-transporter complex. Unlike classic ABC transporters this ECF transporter provides the energy necessary to transport a number of different substrates. In Clostridium tetani (strain Massachusetts / E88), this protein is Energy-coupling factor transporter ATP-binding protein EcfA2.